Consider the following 196-residue polypeptide: DnaA initiator-associating protein DiaA (196 aa).

An SIS domain is found at 34-196 (LVQSLLNGNK…DNTLFPHQDD (163 aa)).

Belongs to the SIS family. DiaA subfamily. Homotetramer; dimer of dimers.

Functionally, required for the timely initiation of chromosomal replication via direct interactions with the DnaA initiator protein. This chain is DnaA initiator-associating protein DiaA, found in Cronobacter sakazakii (strain ATCC BAA-894) (Enterobacter sakazakii).